The chain runs to 236 residues: tRNA (guanine-N(7)-)-methyltransferase (236 aa).

4 residues coordinate S-adenosyl-L-methionine: Asp35, Glu60, Asn87, and Asp113. The active site involves Asp113. Positions 117 and 149 each coordinate substrate.

It belongs to the class I-like SAM-binding methyltransferase superfamily. TrmB family.

The enzyme catalyses guanosine(46) in tRNA + S-adenosyl-L-methionine = N(7)-methylguanosine(46) in tRNA + S-adenosyl-L-homocysteine. Its pathway is tRNA modification; N(7)-methylguanine-tRNA biosynthesis. In terms of biological role, catalyzes the formation of N(7)-methylguanine at position 46 (m7G46) in tRNA. This Parasynechococcus marenigrum (strain WH8102) protein is tRNA (guanine-N(7)-)-methyltransferase.